Here is a 366-residue protein sequence, read N- to C-terminus: Spermidine/putrescine import ATP-binding protein PotA (366 aa).

The ABC transporter domain maps to 8 to 239 (IRFENVTKQF…PINKFVADFI (232 aa)). Residue 41–48 (GPSGCGKT) coordinates ATP.

The protein belongs to the ABC transporter superfamily. Spermidine/putrescine importer (TC 3.A.1.11.1) family. As to quaternary structure, the complex is composed of two ATP-binding proteins (PotA), two transmembrane proteins (PotB and PotC) and a solute-binding protein (PotD).

The protein localises to the cell membrane. It carries out the reaction ATP + H2O + polyamine-[polyamine-binding protein]Side 1 = ADP + phosphate + polyamineSide 2 + [polyamine-binding protein]Side 1.. Its function is as follows. Part of the ABC transporter complex PotABCD involved in spermidine/putrescine import. Responsible for energy coupling to the transport system. The polypeptide is Spermidine/putrescine import ATP-binding protein PotA (Listeria innocua serovar 6a (strain ATCC BAA-680 / CLIP 11262)).